A 400-amino-acid polypeptide reads, in one-letter code: Formate-dependent phosphoribosylglycinamide formyltransferase (400 aa).

Residues 22–23 and E82 contribute to the N(1)-(5-phospho-beta-D-ribosyl)glycinamide site; that span reads EL. ATP is bound by residues R115, K156, 161–166, 196–199, and E204; these read SSGKGQ and EGFI. One can recognise an ATP-grasp domain in the interval 120–309; sequence RLAAETLGLP…EFALHARAIL (190 aa). Mg(2+) is bound by residues E268 and E280. Residues D287, K361, and 368-369 contribute to the N(1)-(5-phospho-beta-D-ribosyl)glycinamide site; that span reads RR.

This sequence belongs to the PurK/PurT family. As to quaternary structure, homodimer.

The enzyme catalyses N(1)-(5-phospho-beta-D-ribosyl)glycinamide + formate + ATP = N(2)-formyl-N(1)-(5-phospho-beta-D-ribosyl)glycinamide + ADP + phosphate + H(+). It participates in purine metabolism; IMP biosynthesis via de novo pathway; N(2)-formyl-N(1)-(5-phospho-D-ribosyl)glycinamide from N(1)-(5-phospho-D-ribosyl)glycinamide (formate route): step 1/1. Its function is as follows. Involved in the de novo purine biosynthesis. Catalyzes the transfer of formate to 5-phospho-ribosyl-glycinamide (GAR), producing 5-phospho-ribosyl-N-formylglycinamide (FGAR). Formate is provided by PurU via hydrolysis of 10-formyl-tetrahydrofolate. This is Formate-dependent phosphoribosylglycinamide formyltransferase from Xanthomonas oryzae pv. oryzae (strain KACC10331 / KXO85).